We begin with the raw amino-acid sequence, 140 residues long: Hemoglobin subunit alpha-D (140 aa).

In terms of domain architecture, Globin spans Met1–Arg140. Residues His57 and His86 each contribute to the heme b site.

It belongs to the globin family. As to quaternary structure, heterotetramer of two alpha-D chains and two beta chains. Red blood cells.

Functionally, involved in oxygen transport from the lung to the various peripheral tissues. This Columba livia (Rock dove) protein is Hemoglobin subunit alpha-D (HBAD).